The chain runs to 471 residues: 5-hydroxytryptamine receptor 2A (471 aa).

The Extracellular segment spans residues 1–80; that stretch reads MEILCEDNIS…LQEKNWSALL (80 aa). Residues Asn8, Asn38, Asn44, Asn51, and Asn54 are each glycosylated (N-linked (GlcNAc...) asparagine). The helical transmembrane segment at 81–97 threads the bilayer; it reads TTVVIILTIAGNILVIM. At 98-111 the chain is on the cytoplasmic side; that stretch reads AVSLEKKLQNATNY. A helical transmembrane segment spans residues 112–137; it reads FLMSLAIADMLLGFLVMPVSMLTILY. Over 138-146 the chain is Extracellular; it reads GYRWPLPSK. A helical membrane pass occupies residues 147–171; it reads LCAVWIYLDVLFSTASIMHLCAISL. A disulfide bridge links Cys148 with Cys227. Residue Asp155 participates in serotonin binding. The DRY motif; important for ligand-induced conformation changes signature appears at 172 to 174; the sequence is DRY. Residues 172-191 lie on the Cytoplasmic side of the membrane; that stretch reads DRYVAIQNPIHHSRFNSRTK. The chain crosses the membrane as a helical span at residues 192-215; sequence AFLKIIAVWTISVGISMPIPVFGL. At 216–232 the chain is on the extracellular side; the sequence is QDDSKVFKEGSCLLADD. The chain crosses the membrane as a helical span at residues 233–258; that stretch reads NFVLIGSFVAFFIPLTIMVITYFLTI. Over 259 to 322 the chain is Cytoplasmic; that stretch reads KSLQKEATLC…QSISNEQKAC (64 aa). At Ser280 the chain carries Phosphoserine. Residues 323–348 traverse the membrane as a helical segment; that stretch reads KVLGIVFFLFVVMWCPFFITNIMAVI. Asn343 is a binding site for serotonin. Cys349 and Cys353 are oxidised to a cystine. Residues 349-356 are Extracellular-facing; sequence CKESCNEN. The chain crosses the membrane as a helical span at residues 357–382; sequence VIGALLNVFVWIGYLSSAVNPLVYTL. The NPxxY motif; important for ligand-induced conformation changes and signaling signature appears at 376–380; that stretch reads NPLVY. At 383–471 the chain is on the cytoplasmic side; sequence FNKTYRSAFS…ETVNEKVSCV (89 aa). Positions 469–471 match the PDZ-binding motif; it reads SCV.

Belongs to the G-protein coupled receptor 1 family. Interacts (via C-terminus) with MPDZ and PATJ. May interact (via C-terminus) with MPP3, PRDX6, DLG4, DLG1, CASK, APBA1 and MAGI2. Interacts with GRM2 and DRD2; this may affect signaling. In terms of tissue distribution, detected in neurons in brain cortex. Detected in adult intestine, especially in mucosal epithelium, longitudinal and circular layers of muscularis externa and myenteric plexuses. Highly expressed in Paneth cells, and detected at lower levels in enterocytes (at protein level). Detected in neurons in the brain cortex.

The protein resides in the cell membrane. Its subcellular location is the cell projection. It localises to the dendrite. It is found in the axon. The protein localises to the cytoplasmic vesicle. The protein resides in the membrane. Its subcellular location is the caveola. It localises to the presynapse. With respect to regulation, G-protein coupled receptor activity is regulated by lipids: oleamide increases HTR2A-mediated activity. In terms of biological role, G-protein coupled receptor for 5-hydroxytryptamine (serotonin). Also functions as a receptor for various drugs and psychoactive substances, including mescaline, psilocybin, 1-(2,5-dimethoxy-4-iodophenyl)-2-aminopropane (DOI) and lysergic acid diethylamide (LSD). Ligand binding causes a conformation change that triggers signaling via guanine nucleotide-binding proteins (G proteins) and modulates the activity of downstream effectors. HTR2A is coupled to G(q)/G(11) G alpha proteins and activates phospholipase C-beta, releasing diacylglycerol (DAG) and inositol 1,4,5-trisphosphate (IP3) second messengers that modulate the activity of phosphatidylinositol 3-kinase and promote the release of Ca(2+) ions from intracellular stores, respectively. Beta-arrestin family members inhibit signaling via G proteins and mediate activation of alternative signaling pathways. Affects neural activity, perception, cognition and mood. Plays a role in the regulation of behavior, including responses to anxiogenic situations and psychoactive substances. Plays a role in intestinal smooth muscle contraction, and may play a role in arterial vasoconstriction. This Mus musculus (Mouse) protein is 5-hydroxytryptamine receptor 2A (Htr2a).